Consider the following 329-residue polypeptide: Strigolactones hydrolase CXE15 (329 aa).

Residues 83–85 carry the Involved in the stabilization of the negatively charged intermediate by the formation of the oxyanion hole motif; that stretch reads HGG. The (-)-2'-epi-GR24 site is built by glycine 85, glycine 86, serine 169, and serine 170. Serine 169 (nucleophile) is an active-site residue. Catalysis depends on residues glutamate 271 and histidine 302.

Belongs to the 'GDXG' lipolytic enzyme family. Expressed in axillary buds, leaves, stems, hypocotyls, flowers, siliques, and vasculatures of shoots and roots.

The protein localises to the nucleus. Its subcellular location is the cytoplasm. The protein resides in the cytosol. The catalysed reaction is (-)-2'-epi-GR24 + H2O = (-)-2'-epi-GR24 ABC-rings + 5-hydroxy-3-methylfuran-2(5H)-one. It catalyses the reaction 5-deoxystrigol + H2O = 5-deoxystrigol ABC-rings + 5-hydroxy-3-methylfuran-2(5H)-one. It carries out the reaction orobanchol + H2O = orobanchol ABC-rings + 5-hydroxy-3-methylfuran-2(5H)-one. Binds to strigolactones (SLs) such as (-)-2'-epi-GR24(4DO), 5-deoxystrigol (5DS) and orobanchol, and catalyzes their hydrolysis; SL are phytohormones controlling shoot branching and communications between plants and microorganisms. Promotes shoot branching by dampening SL-inhibited axillary bud outgrowth. The sequence is that of Strigolactones hydrolase CXE15 from Arabidopsis thaliana (Mouse-ear cress).